Reading from the N-terminus, the 502-residue chain is Actin nucleation-promoting factor WAS (502 aa).

Residues 39 to 148 (LGRKCLTLAT…ALVQEKIQKR (110 aa)) form the WH1 domain. The disordered stretch occupies residues 146–240 (QKRNQRQSGD…KKISKADIGA (95 aa)). Polar residues predominate over residues 201-211 (DIQNPDITSSR). Ser-221 bears the Phosphoserine mark. One can recognise a CRIB domain in the interval 238-251 (IGAPSGFKHVSHVG). Tyr-291 is modified (phosphotyrosine; by FYN and HCK). The disordered stretch occupies residues 307 to 502 (MRRQEPLPPP…DEDEDDEWDD (196 aa)). GRSGPLPPXP motif repeat units lie at residues 337–346 (GRSGPLPPVP) and 376–385 (GRSGPLPPPP). The span at 341-419 (PLPPVPLGIA…PAPPPLPPAL (79 aa)) shows a compositional bias: pro residues. Positions 430-447 (GRGALLDQIRQGIQLNKT) constitute a WH2 domain. 2 positions are modified to phosphoserine; by CK2: Ser-483 and Ser-484. Over residues 486-502 (EGEDQAGDEDEDDEWDD) the composition is skewed to acidic residues.

In terms of assembly, binds the Arp2/3 complex. Interacts with CDC42, RAC, NCK, HCK, FYN, SRC kinase FGR, BTK, ABL1, PSTPIP1, WIP, and to the p85 subunit of PLC-gamma. Interacts (via C-terminus) with ALDOA. Interacts with NCK1 (via SH3 domains). Interacts with FCHSD2. (Microbial infection) Interacts with E.coli effector protein EspF(U). Phosphorylated at Tyr-291 by FYN and HCK, inducing WAS effector activity after TCR engagement. Phosphorylation at Tyr-291 enhances WAS activity in promoting actin polymerization and filopodia formation. In terms of tissue distribution, expressed predominantly in the thymus. Also found, to a much lesser extent, in the spleen.

The protein resides in the cytoplasm. The protein localises to the cytoskeleton. Its subcellular location is the nucleus. Effector protein for Rho-type GTPases that regulates actin filament reorganization via its interaction with the Arp2/3 complex. Important for efficient actin polymerization. Possible regulator of lymphocyte and platelet function. Mediates actin filament reorganization and the formation of actin pedestals upon infection by pathogenic bacteria. In addition to its role in the cytoplasmic cytoskeleton, also promotes actin polymerization in the nucleus, thereby regulating gene transcription and repair of damaged DNA. Promotes homologous recombination (HR) repair in response to DNA damage by promoting nuclear actin polymerization, leading to drive motility of double-strand breaks (DSBs). This Homo sapiens (Human) protein is Actin nucleation-promoting factor WAS (WAS).